The following is a 306-amino-acid chain: Ribosomal RNA small subunit methyltransferase H (306 aa).

S-adenosyl-L-methionine is bound by residues 37 to 39, Asp56, Asp102, and Gln109; that span reads GGH.

Belongs to the methyltransferase superfamily. RsmH family.

The protein resides in the cytoplasm. The enzyme catalyses cytidine(1402) in 16S rRNA + S-adenosyl-L-methionine = N(4)-methylcytidine(1402) in 16S rRNA + S-adenosyl-L-homocysteine + H(+). Specifically methylates the N4 position of cytidine in position 1402 (C1402) of 16S rRNA. The polypeptide is Ribosomal RNA small subunit methyltransferase H (Nautilia profundicola (strain ATCC BAA-1463 / DSM 18972 / AmH)).